Here is a 441-residue protein sequence, read N- to C-terminus: Protein SPMIP7 (441 aa).

Testis specific. Expressed at the spermatid stage.

In terms of biological role, essential for normal spermatogenesis. The polypeptide is Protein SPMIP7 (Spmip7) (Mus musculus (Mouse)).